The sequence spans 474 residues: 3-isopropylmalate dehydratase large subunit (474 aa).

[4Fe-4S] cluster is bound by residues cysteine 353, cysteine 413, and cysteine 416.

The protein belongs to the aconitase/IPM isomerase family. LeuC type 1 subfamily. In terms of assembly, heterodimer of LeuC and LeuD. It depends on [4Fe-4S] cluster as a cofactor.

The enzyme catalyses (2R,3S)-3-isopropylmalate = (2S)-2-isopropylmalate. It participates in amino-acid biosynthesis; L-leucine biosynthesis; L-leucine from 3-methyl-2-oxobutanoate: step 2/4. In terms of biological role, catalyzes the isomerization between 2-isopropylmalate and 3-isopropylmalate, via the formation of 2-isopropylmaleate. This chain is 3-isopropylmalate dehydratase large subunit, found in Roseiflexus sp. (strain RS-1).